A 974-amino-acid chain; its full sequence is Translation initiation factor IF-2 (974 aa).

The disordered stretch occupies residues 31 to 376; sequence FVKSASSTVE…APAVGGVRLP (346 aa). Low complexity predominate over residues 52-68; it reads PSAKSADSAARPAAKPG. Positions 83 to 96 are enriched in pro residues; sequence GPRPGPKPAAPAPA. The span at 97–133 shows a compositional bias: low complexity; sequence APAAAAPAATPAAQAPAPAAPAASTATPAAPASNAPK. The span at 134–147 shows a compositional bias: pro residues; that stretch reads PGRPTPAAPAPAAP. 2 stretches are compositionally biased toward low complexity: residues 148 to 166 and 179 to 191; these read AAPA…STGA and RVGN…APAE. Composition is skewed to pro residues over residues 195-210 and 253-266; these read PRPA…PRPA and RPSP…PNPG. Positions 267-277 are enriched in low complexity; it reads AMPARSARPAP. Residues 279-332 are compositionally biased toward gly residues; it reads GRPGRPGGAPGGRPGGGGGGYRGGGAPGAGAGAPGGGAPAGGFRGRPGGGGRPG. Basic residues predominate over residues 349–358; that stretch reads RRGRKSKRQK. Residues 470 to 641 enclose the tr-type G domain; the sequence is SRPPVVTVMG…AVLLTADAAL (172 aa). The segment at 479–486 is G1; it reads GHVDHGKT. 479-486 lines the GTP pocket; the sequence is GHVDHGKT. Residues 504–508 form a G2 region; it reads GITQH. The segment at 529-532 is G3; the sequence is DTPG. GTP contacts are provided by residues 529-533 and 583-586; these read DTPGH and NKID. Residues 583 to 586 are G4; that stretch reads NKID. Residues 619–621 are G5; the sequence is SAK.

Belongs to the TRAFAC class translation factor GTPase superfamily. Classic translation factor GTPase family. IF-2 subfamily.

Its subcellular location is the cytoplasm. One of the essential components for the initiation of protein synthesis. Protects formylmethionyl-tRNA from spontaneous hydrolysis and promotes its binding to the 30S ribosomal subunits. Also involved in the hydrolysis of GTP during the formation of the 70S ribosomal complex. The polypeptide is Translation initiation factor IF-2 (Rhodococcus opacus (strain B4)).